We begin with the raw amino-acid sequence, 181 residues long: Segregation and condensation protein B (181 aa).

The protein belongs to the ScpB family. As to quaternary structure, homodimer. Homodimerization may be required to stabilize the binding of ScpA to the Smc head domains. Component of a cohesin-like complex composed of ScpA, ScpB and the Smc homodimer, in which ScpA and ScpB bind to the head domain of Smc. The presence of the three proteins is required for the association of the complex with DNA.

It localises to the cytoplasm. In terms of biological role, participates in chromosomal partition during cell division. May act via the formation of a condensin-like complex containing Smc and ScpA that pull DNA away from mid-cell into both cell halves. In Desulforamulus reducens (strain ATCC BAA-1160 / DSM 100696 / MI-1) (Desulfotomaculum reducens), this protein is Segregation and condensation protein B.